Consider the following 240-residue polypeptide: RNA-free ribonuclease P (240 aa).

Belongs to the HARP family.

It carries out the reaction Endonucleolytic cleavage of RNA, removing 5'-extranucleotides from tRNA precursor.. Its function is as follows. RNA-free RNase P that catalyzes the removal of the 5'-leader sequence from pre-tRNA to produce the mature 5'-terminus. This Methanococcus aeolicus (strain ATCC BAA-1280 / DSM 17508 / OCM 812 / Nankai-3) protein is RNA-free ribonuclease P.